The primary structure comprises 535 residues: F-box protein At1g56610 (535 aa).

Helical transmembrane passes span 3 to 23, 37 to 57, and 82 to 102; these read FALV…SSSI, VLLL…LCLF, and LAPH…SLLF. The F-box; degenerate domain maps to 73–119; it reads TELCDLPKCLAPHILSWLPTKTAVTVSLLFMKGWWRSEMKNLSSLKF.

In terms of assembly, part of a SCF (ASK-cullin-F-box) protein ligase complex. Interacts with ASK4.

The protein localises to the membrane. Its pathway is protein modification; protein ubiquitination. In terms of biological role, component of SCF(ASK-cullin-F-box) E3 ubiquitin ligase complexes, which may mediate the ubiquitination and subsequent proteasomal degradation of target proteins. The polypeptide is F-box protein At1g56610 (Arabidopsis thaliana (Mouse-ear cress)).